The chain runs to 205 residues: Putative 3-methyladenine DNA glycosylase (205 aa).

It belongs to the DNA glycosylase MPG family.

This is Putative 3-methyladenine DNA glycosylase from Clostridium perfringens (strain SM101 / Type A).